Here is a 364-residue protein sequence, read N- to C-terminus: Probable protein disulfide-isomerase A6 (364 aa).

The signal sequence occupies residues 1–28 (MKMEMHQIWSRIALASFAFAILFVSVSA). Thioredoxin domains follow at residues 29–137 (DDVV…TEGG) and 139–256 (NVKI…EKSG). Residues Cys58, Cys61, Cys177, and Cys180 each act as nucleophile in the active site. 2 disulfide bridges follow: Cys58–Cys61 and Cys177–Cys180.

The protein belongs to the protein disulfide isomerase family.

The protein resides in the endoplasmic reticulum lumen. It carries out the reaction Catalyzes the rearrangement of -S-S- bonds in proteins.. The polypeptide is Probable protein disulfide-isomerase A6 (Medicago sativa (Alfalfa)).